The chain runs to 450 residues: MADGIDRTAEERMEFTTSKEVTVAPTFEDMHLKENLLRGIYAYGYESPSAVQSRAIVQICKGRDTIAQAQSGTGKTATFSISILQVIDTVLRETQALVLSPTRELATQIQSVVMALGDYMNVQCHACIGGTNVGEDIRKLDHGQHVVSGTPGRVADMIRRRHLRTRHIKMLVLDEADELLNRGFREQIYDVYRYLPPATQVVVVSATLPYDVLDMTTKFMTDPVRILVKRDELTLEGLKQYFIAVEKEEWKFDTLCDLYDTLTITQAVIFCNTRRKVDWLTDKMREANFTVSSMHGEMPQKERDSIMQDFRQGNSRVLISTDVWARGIDVQQVSLVINYDLPSNRENYIHRIGRSGRFGRKGVAINFVTSEDVRILRDIELYYSTQIDEMPMNGTLFYLRYRPMSRLSLWLTQSNSCRPSHVTTLSWSTNVEHTFPLLLMNAFSKIQIGI.

The Q motif motif lies at 25 to 53 (PTFEDMHLKENLLRGIYAYGYESPSAVQS). In terms of domain architecture, Helicase ATP-binding spans 56-226 (IVQICKGRDT…TKFMTDPVRI (171 aa)). 69–76 (AQSGTGKT) contacts ATP. The DEAD box signature appears at 174–177 (DEAD). In terms of domain architecture, Helicase C-terminal spans 237–398 (GLKQYFIAVE…EMPMNGTLFY (162 aa)).

It belongs to the DEAD box helicase family. DDX48/FAL1 subfamily.

Its subcellular location is the nucleus. The protein localises to the nucleolus. The catalysed reaction is ATP + H2O = ADP + phosphate + H(+). In terms of biological role, ATP-dependent RNA helicase involved in 40S ribosomal subunit biogenesis. Required for the processing and cleavage of 35S pre-rRNA at sites A0, A1, and A2, leading to mature 18S rRNA. The sequence is that of ATP-dependent RNA helicase FAL1 (FAL1) from Ajellomyces capsulatus (strain NAm1 / WU24) (Darling's disease fungus).